The following is a 407-amino-acid chain: Peptidase T (407 aa).

Zn(2+) is bound at residue His-78. Residue Asp-80 is part of the active site. Asp-139 is a Zn(2+) binding site. Glu-173 acts as the Proton acceptor in catalysis. Positions 174, 196, and 378 each coordinate Zn(2+).

The protein belongs to the peptidase M20B family. The cofactor is Zn(2+).

The protein resides in the cytoplasm. It carries out the reaction Release of the N-terminal residue from a tripeptide.. In terms of biological role, cleaves the N-terminal amino acid of tripeptides. In Macrococcus caseolyticus (strain JCSC5402) (Macrococcoides caseolyticum), this protein is Peptidase T.